The chain runs to 278 residues: Bicarbonate transport system permease protein CmpB (278 aa).

Helical transmembrane passes span 24–44 (LDGILLPLAGILGFLIIWQIF), 93–113 (VAQGFSIAAIIGISVGILVGL), 124–144 (LFQFLRMIAPLAWVPIALVAF), 151–171 (AIFVIFITAVWPILINTAEGV), 196–216 (VVLPAALPYIFTGLRIAIGLS), 217–237 (WLAIIAAEIVMSGIVGIGFFI), and 249–269 (IILAVIYIGAVGLLLDRFVAW). In terms of domain architecture, ABC transmembrane type-1 spans 86–267 (TIASLTRVAQ…AVGLLLDRFV (182 aa)).

It belongs to the binding-protein-dependent transport system permease family. The complex is composed of two ATP-binding proteins (CmpC and CmpD), a transmembrane protein (CmpB) and a solute-binding protein (CmpA).

It localises to the cell inner membrane. Part of the ABC transporter complex CmpABCD involved in bicarbonate transport. Probably responsible for the translocation of the substrate across the membrane. In Synechococcus sp. (strain ATCC 27144 / PCC 6301 / SAUG 1402/1) (Anacystis nidulans), this protein is Bicarbonate transport system permease protein CmpB (cmpB).